We begin with the raw amino-acid sequence, 422 residues long: Putative acid phosphatase 5 (422 aa).

The signal sequence occupies residues 1–13; it reads MLLLLVLLIGASG. Histidine 40 (nucleophile) is an active-site residue. Asparagine 104, asparagine 210, and asparagine 218 each carry an N-linked (GlcNAc...) asparagine glycan. 3 disulfides stabilise this stretch: cysteine 152/cysteine 363, cysteine 205/cysteine 302, and cysteine 338/cysteine 342. The Proton donor role is filled by aspartate 279. Asparagine 312 and asparagine 323 each carry an N-linked (GlcNAc...) asparagine glycan.

Belongs to the histidine acid phosphatase family.

The catalysed reaction is a phosphate monoester + H2O = an alcohol + phosphate. The chain is Putative acid phosphatase 5 (pho-5) from Caenorhabditis elegans.